The following is a 43-amino-acid chain: Defensin (43 aa).

3 disulfides stabilise this stretch: Cys-3-Cys-34, Cys-20-Cys-39, and Cys-24-Cys-41.

It localises to the secreted. Antibacterial peptide active against Gram-positive and Gram-negative bacteria. The sequence is that of Defensin from Palomena prasina (Green shield bug).